Consider the following 92-residue polypeptide: Large ribosomal subunit protein eL43 (92 aa).

The segment at C39 to C60 adopts a C4-type zinc-finger fold.

It belongs to the eukaryotic ribosomal protein eL43 family.

This chain is Large ribosomal subunit protein eL43 (RpL37A), found in Drosophila melanogaster (Fruit fly).